Here is a 452-residue protein sequence, read N- to C-terminus: 23S rRNA (uracil(1939)-C(5))-methyltransferase RlmD (452 aa).

The TRAM domain maps to 1–57 (METEVNVAEISALDYEGRGVTKVGGKTVFIKGALPSERVGFRIVRQKKQFDEAEAVA). The [4Fe-4S] cluster site is built by Cys70, Cys76, Cys79, and Cys157. The S-adenosyl-L-methionine site is built by Gln269, Phe298, Asn303, Glu319, Asn347, and Asp368. Cys395 functions as the Nucleophile in the catalytic mechanism.

The protein belongs to the class I-like SAM-binding methyltransferase superfamily. RNA M5U methyltransferase family. RlmD subfamily.

It carries out the reaction uridine(1939) in 23S rRNA + S-adenosyl-L-methionine = 5-methyluridine(1939) in 23S rRNA + S-adenosyl-L-homocysteine + H(+). In terms of biological role, catalyzes the formation of 5-methyl-uridine at position 1939 (m5U1939) in 23S rRNA. The polypeptide is 23S rRNA (uracil(1939)-C(5))-methyltransferase RlmD (Neisseria lactamica (strain 020-06)).